The following is a 448-amino-acid chain: Trigger factor (448 aa).

The PPIase FKBP-type domain maps to 172–257 (GDRVTVDFVG…MKKIEWPHLP (86 aa)).

This sequence belongs to the FKBP-type PPIase family. Tig subfamily.

The protein resides in the cytoplasm. It catalyses the reaction [protein]-peptidylproline (omega=180) = [protein]-peptidylproline (omega=0). Involved in protein export. Acts as a chaperone by maintaining the newly synthesized protein in an open conformation. Functions as a peptidyl-prolyl cis-trans isomerase. This chain is Trigger factor, found in Burkholderia orbicola (strain MC0-3).